A 369-amino-acid chain; its full sequence is Putative agmatine deiminase (369 aa).

The Amidino-cysteine intermediate role is filled by Cys-355.

The protein belongs to the agmatine deiminase family.

It carries out the reaction agmatine + H2O = N-carbamoylputrescine + NH4(+). This is Putative agmatine deiminase from Marinomonas sp. (strain MWYL1).